Consider the following 594-residue polypeptide: P-granule-associated novel protein 1 (594 aa).

An N-terminal signal peptide occupies residues 1-18 (MRSLLSFVLLALARIAIS). Residues 19 to 513 (EETKSCIDIE…PEEEEVYRSG (495 aa)) are Extracellular-facing. 15 LRR repeats span residues 78–101 (GTELGRLTIRDSTVNVLPQDLFEN), 103–124 (FAKQVKLERCGLSTLQPNSFQS), 125–149 (LGGSAELLSLRENRIKKLEKGLFTG), 150–173 (LKSLKTLDLAMNKIQEIDVGAFEE), 175–197 (KKVEELLLNENDIRVLKTGTFDG), 198–221 (MKNLKKLTLQNCNLEIIQKGAFRG), 222–245 (LNSLEQLILSNNNLENIDWTIFSA), 246–269 (LKNLRVLDLGSNKISNVEMKSFPK), 271–290 (EKLVLNNNTIDSMKSIKLKD), 291–315 (LPSLVVALFDRNKIESIGDMDMFGL), 318–341 (SDRIETLSLARNNLSQISPKAFQH), 343–365 (PNLITLLLQYNQIEELSSHSPSQ), 374–397 (LKKLVTLQLSSNNLSVIRSDELPK), 399–419 (LSSLALDHNVISKIEARALEG), and 420–442 (MEIKRLYLHSNKLNYLYQGTFDS). Residues 514 to 534 (WITVAATILTIVTIVIMVIIA) traverse the membrane as a helical segment. At 535 to 594 (MLYFKDARYQFPLRGRRSDSDLHKLIENDPLNIASDSILVVPAMPKRNTGPKKTVRFQNF) the chain is on the cytoplasmic side.

Interacts with glh-1. Interacts (via LRR regions) with myrf-1 (via C-terminus); the interaction promotes the role of myrf-1 in the synaptic remodeling of DD GABAergic motor neurons at the cell membrane. As to expression, expressed in the germline and somatic cells. In terms of tissue distribution, expressed in the germline and somatic cells. Expressed at higher levels in germline cells relative to somatic cells. Expressed in germline cells. As to expression, highly expressed in the pharynx and at lower levels in the intestine, but not detected in other tissues. Other studies suggest a broader expression pattern in somatic tissues: from embryogenesis to adult stages, expressed strongly in body wall muscle, vulva, somatic gonad and pharynx, at lower levels in the nerve ring, hypodermis, and rectal epithelia, and very weakly in the intestine.

It localises to the cytoplasm. It is found in the apical cell membrane. Regulates diverse developmental processes including larval molting and gonad maturation. In terms of biological role, promotes the localization of myrf-1 and myrf-2 to the cell membrane. In association with myrf-1, promotes the synaptic remodeling of DD GABAergic motor neurons whereby new synapses form in the dorsal processes of DD neurons. The polypeptide is P-granule-associated novel protein 1 (Caenorhabditis elegans).